The primary structure comprises 384 residues: Cysteine protease ATG4B (384 aa).

The active-site Nucleophile is the C74. Catalysis depends on residues D269 and H271. An LIR motif is present at residues 379 to 382 (FEIL).

Belongs to the peptidase C54 family.

The protein localises to the cytoplasm. The protein resides in the cytosol. It localises to the cytoplasmic vesicle. It is found in the autophagosome. Its subcellular location is the endoplasmic reticulum. The protein localises to the mitochondrion. The catalysed reaction is [protein]-C-terminal L-amino acid-glycyl-phosphatidylethanolamide + H2O = [protein]-C-terminal L-amino acid-glycine + a 1,2-diacyl-sn-glycero-3-phosphoethanolamine. It carries out the reaction [protein]-C-terminal L-amino acid-glycyl-phosphatidylserine + H2O = [protein]-C-terminal L-amino acid-glycine + a 1,2-diacyl-sn-glycero-3-phospho-L-serine. In terms of biological role, cysteine protease that plays a key role in autophagy by mediating both proteolytic activation and delipidation of ATG8 family proteins. Required for canonical autophagy (macroautophagy), non-canonical autophagy as well as for mitophagy. The protease activity is required for proteolytic activation of ATG8 family proteins: cleaves the C-terminal amino acid of ATG8 proteins to reveal a C-terminal glycine. Exposure of the glycine at the C-terminus is essential for ATG8 proteins conjugation to phosphatidylethanolamine (PE) and insertion to membranes, which is necessary for autophagy. Protease activity is also required to counteract formation of high-molecular weight conjugates of ATG8 proteins (ATG8ylation): acts as a deubiquitinating-like enzyme that removes ATG8 conjugated to other proteins, such as ATG3. In addition to the protease activity, also mediates delipidation of ATG8 family proteins. Catalyzes delipidation of PE-conjugated forms of ATG8 proteins during macroautophagy. Also involved in non-canonical autophagy, a parallel pathway involving conjugation of ATG8 proteins to single membranes at endolysosomal compartments, by catalyzing delipidation of ATG8 proteins conjugated to phosphatidylserine (PS). The chain is Cysteine protease ATG4B from Xenopus laevis (African clawed frog).